The sequence spans 499 residues: Lysine--tRNA ligase (499 aa).

2 residues coordinate Mg(2+): E409 and E416.

This sequence belongs to the class-II aminoacyl-tRNA synthetase family. In terms of assembly, homodimer. It depends on Mg(2+) as a cofactor.

Its subcellular location is the cytoplasm. It catalyses the reaction tRNA(Lys) + L-lysine + ATP = L-lysyl-tRNA(Lys) + AMP + diphosphate. This Thioalkalivibrio sulfidiphilus (strain HL-EbGR7) protein is Lysine--tRNA ligase.